A 108-amino-acid polypeptide reads, in one-letter code: Nucleoid-associated protein GWCH70_0020 (108 aa).

The disordered stretch occupies residues 1-34 (MMRGGMGNMQKMMKQMQKMQKEMQKAQEQLAEKT). Over residues 9 to 18 (MQKMMKQMQK) the composition is skewed to low complexity. Residues 19–34 (MQKEMQKAQEQLAEKT) show a composition bias toward basic and acidic residues.

Belongs to the YbaB/EbfC family. As to quaternary structure, homodimer.

It localises to the cytoplasm. The protein resides in the nucleoid. In terms of biological role, binds to DNA and alters its conformation. May be involved in regulation of gene expression, nucleoid organization and DNA protection. This is Nucleoid-associated protein GWCH70_0020 from Geobacillus sp. (strain WCH70).